Here is a 385-residue protein sequence, read N- to C-terminus: Period circadian protein (385 aa).

Disordered stretches follow at residues Thr28–Val121, Gly169–Glu189, and Ser322–Gly351. Positions Ser71–Thr93 are enriched in low complexity. Gly residues predominate over residues Gly94 to Ser115. Residues His340–Gly351 are compositionally biased toward polar residues.

In terms of assembly, forms a heterodimer with timeless (TIM); the complex then translocates into the nucleus. In terms of processing, phosphorylated with a circadian rhythmicity, probably by the double-time protein (dbt). Phosphorylation could be implicated in the stability of per monomer and in the formation of heterodimer per-tim.

The protein localises to the nucleus. The protein resides in the cytoplasm. It is found in the perinuclear region. In terms of biological role, essential for biological clock functions. Determines the period length of circadian and ultradian rhythms; an increase in PER dosage leads to shortened circadian rhythms and a decrease leads to lengthened circadian rhythms. Essential for the circadian rhythmicity of locomotor activity, eclosion behavior, and for the rhythmic component of the male courtship song that originates in the thoracic nervous system. The biological cycle depends on the rhythmic formation and nuclear localization of the TIM-PER complex. Light induces the degradation of TIM, which promotes elimination of PER. Nuclear activity of the heterodimer coordinatively regulates PER and TIM transcription through a negative feedback loop. Behaves as a negative element in circadian transcriptional loop. Does not appear to bind DNA, suggesting indirect transcriptional inhibition. The sequence is that of Period circadian protein (per) from Drosophila nebulosa (Fruit fly).